A 354-amino-acid chain; its full sequence is Peptide chain release factor 1 (354 aa).

Glutamine 230 bears the N5-methylglutamine mark.

It belongs to the prokaryotic/mitochondrial release factor family. Post-translationally, methylated by PrmC. Methylation increases the termination efficiency of RF1.

The protein localises to the cytoplasm. Functionally, peptide chain release factor 1 directs the termination of translation in response to the peptide chain termination codons UAG and UAA. This Leptospira interrogans serogroup Icterohaemorrhagiae serovar copenhageni (strain Fiocruz L1-130) protein is Peptide chain release factor 1.